Here is a 478-residue protein sequence, read N- to C-terminus: Early growth response protein 4 (478 aa).

A disordered region spans residues 15 to 37 (SKPTEGCAHTSPELPRLPARDAP). 3 C2H2-type zinc fingers span residues 372–396 (FACPVESCVRTFARSDELNRHLRIH), 402–424 (FQCRICLRNFSRSDHLTTHVRTH), and 430–452 (FACDVCGRRFARSDEKKRHSKVH).

Belongs to the EGR C2H2-type zinc-finger protein family.

The protein localises to the nucleus. Transcriptional regulator. Recognizes and binds to the DNA sequence 5'-GCGGGGGCG-3' (GSG). Activates the transcription of target genes whose products are required for mitogenesis and differentiation. The chain is Early growth response protein 4 (Egr4) from Rattus norvegicus (Rat).